The primary structure comprises 220 residues: MLMEDADVLWYHTVEKLKREGIIRSEKVRQAFLKVPRYLFVLPEHKKWAHVDEPLPIPGGQTISAPHMVAIMLELAELEEGMNVLDIGTGSGWNAALAAELVKTDVYTVERIPELVEFARKNLEKAGYADRVHVIIGDGTKGFPPKAPYDRILVAAGAPNVPEPLVEQLKPGGKLIIPVGSYHLWQELYEVIKLKDGSVKVKRHGGVAFVPLIGEHGWKE.

The active site involves Ser64.

The protein belongs to the methyltransferase superfamily. L-isoaspartyl/D-aspartyl protein methyltransferase family.

The protein resides in the cytoplasm. The enzyme catalyses [protein]-L-isoaspartate + S-adenosyl-L-methionine = [protein]-L-isoaspartate alpha-methyl ester + S-adenosyl-L-homocysteine. Functionally, catalyzes the methyl esterification of L-isoaspartyl residues in peptides and proteins that result from spontaneous decomposition of normal L-aspartyl and L-asparaginyl residues. It plays a role in the repair and/or degradation of damaged proteins. This chain is Protein-L-isoaspartate O-methyltransferase, found in Thermococcus onnurineus (strain NA1).